Reading from the N-terminus, the 388-residue chain is Succinate--CoA ligase [ADP-forming] subunit beta (388 aa).

Residues K9–H244 enclose the ATP-grasp domain. Residues K46, G53 to G55, E99, T102, and E107 each bind ATP. The Mg(2+) site is built by N199 and D213. Residues N264 and G321–V323 contribute to the substrate site.

This sequence belongs to the succinate/malate CoA ligase beta subunit family. Heterotetramer of two alpha and two beta subunits. Mg(2+) serves as cofactor.

The catalysed reaction is succinate + ATP + CoA = succinyl-CoA + ADP + phosphate. It catalyses the reaction GTP + succinate + CoA = succinyl-CoA + GDP + phosphate. The protein operates within carbohydrate metabolism; tricarboxylic acid cycle; succinate from succinyl-CoA (ligase route): step 1/1. In terms of biological role, succinyl-CoA synthetase functions in the citric acid cycle (TCA), coupling the hydrolysis of succinyl-CoA to the synthesis of either ATP or GTP and thus represents the only step of substrate-level phosphorylation in the TCA. The beta subunit provides nucleotide specificity of the enzyme and binds the substrate succinate, while the binding sites for coenzyme A and phosphate are found in the alpha subunit. This chain is Succinate--CoA ligase [ADP-forming] subunit beta, found in Shewanella baltica (strain OS195).